The chain runs to 272 residues: TIP41-like protein (272 aa).

N6-acetyllysine is present on Lys-106. The interval 173-272 (RVMPSSFFLL…ADSQKSTQVE (100 aa)) is interaction with PPP2CA. Ser-265 carries the phosphoserine modification.

It belongs to the TIP41 family. As to quaternary structure, isoform 1 interacts with PPP2CA. Isoform 2 does not interact with PPP2CA. Interacts with PPP2CB, PPP4C and PPP6C. Interacts with IGBP1; the interaction is dependent on PPP2CA. Associates with a protein phosphatase 2A PP2A(C):IGBP1 complex. Interacts with PPP4C and PPP4R2.

It localises to the cytoplasm. Its function is as follows. May be a allosteric regulator of serine/threonine-protein phosphatase 2A (PP2A). Isoform 1 inhibits catalytic activity of the PP2A(D) core complex in vitro. The PP2A(C):TIPRL complex does not show phosphatase activity. Acts as a negative regulator of serine/threonine-protein phosphatase 4 probably by inhibiting the formation of the active PPP4C:PPP4R2 complex; the function is proposed to implicate it in DNA damage response by promoting H2AX phosphorylated on Ser-140 (gamma-H2AX). May play a role in the regulation of ATM/ATR signaling pathway controlling DNA replication and repair. This Homo sapiens (Human) protein is TIP41-like protein (TIPRL).